Consider the following 143-residue polypeptide: Small ribosomal subunit protein bS6 (143 aa).

Residues 95 to 143 (GPDTEQSFIMKSKDDKGDKPERRRRDDDENGDVGVSNDSDNDGGNAEAA) are disordered. Basic and acidic residues predominate over residues 105–121 (KSKDDKGDKPERRRRDD).

The protein belongs to the bacterial ribosomal protein bS6 family.

Functionally, binds together with bS18 to 16S ribosomal RNA. This Xylella fastidiosa (strain M23) protein is Small ribosomal subunit protein bS6.